Reading from the N-terminus, the 91-residue chain is PqqA binding protein (91 aa).

Belongs to the PqqD family. In terms of assembly, monomer. Interacts with PqqE.

It functions in the pathway cofactor biosynthesis; pyrroloquinoline quinone biosynthesis. In terms of biological role, functions as a PqqA binding protein and presents PqqA to PqqE, in the pyrroloquinoline quinone (PQQ) biosynthetic pathway. The sequence is that of PqqA binding protein from Pseudomonas entomophila (strain L48).